Here is a 258-residue protein sequence, read N- to C-terminus: Phosphate import ATP-binding protein PstB 1 (258 aa).

The region spanning 5-247 (LDLTDVNIYY…EKIFSNPNQK (243 aa)) is the ABC transporter domain. Residue 37 to 44 (GPSGCGKT) participates in ATP binding.

It belongs to the ABC transporter superfamily. Phosphate importer (TC 3.A.1.7) family. The complex is composed of two ATP-binding proteins (PstB), two transmembrane proteins (PstC and PstA) and a solute-binding protein (PstS).

It is found in the cell membrane. It carries out the reaction phosphate(out) + ATP + H2O = ADP + 2 phosphate(in) + H(+). Its function is as follows. Part of the ABC transporter complex PstSACB involved in phosphate import. Responsible for energy coupling to the transport system. In Mycobacterium bovis (strain ATCC BAA-935 / AF2122/97), this protein is Phosphate import ATP-binding protein PstB 1.